A 606-amino-acid polypeptide reads, in one-letter code: Probable glutamine--fructose-6-phosphate aminotransferase [isomerizing] (606 aa).

Catalysis depends on Cys-2, which acts as the For GATase activity. One can recognise a Glutamine amidotransferase type-2 domain in the interval Cys-2 to Asn-224. 2 SIS domains span residues Phe-282 to Asn-427 and Leu-458 to Pro-596.

The enzyme catalyses D-fructose 6-phosphate + L-glutamine = D-glucosamine 6-phosphate + L-glutamate. It participates in nucleotide-sugar biosynthesis; UDP-N-acetyl-alpha-D-glucosamine biosynthesis; alpha-D-glucosamine 6-phosphate from D-fructose 6-phosphate: step 1/1. Controls the flux of glucose into the hexosamine pathway. Most likely involved in regulating the availability of precursors for glycosylation of proteins (Potential). The chain is Probable glutamine--fructose-6-phosphate aminotransferase [isomerizing] from Acanthamoeba polyphaga (Amoeba).